The following is an 831-amino-acid chain: MNHRIEDITSNPSSPSPNSPFSSPQVSLQPSIIQNGLNSNNSLLNGNNFNLNGNITSSPSTSSSPPISTTTTTTTTTTTTATAKKTNSKEKKKTTNKDNNNNNNNNNSNNQQQQQQQQQQQQQQQQQQQYEEEDDDEEDEGGDDNTKVGKGEKMKARRTNQNIASRNYRQRKKVYIKEMEDKINSLTLENDSLKKDLYKIGNNPLELLKFSQEVVFLMTQIRRLVFQIDQALRNSEPDSSIKSLLNTWQSTMDQASSINEREIERFVHPYTQAKLTVMGYKPHTNPWTDFIKTPGQEDWWTKYAEKANLSSDQLEQINNLWLRFDEEERVLQKELTDLDEYIKKFFLTKIIIMPDTEKLNDIISSCLPIPENHDGDILQTSEVLEFIYNLEKLKQKFIKVQRLTWDTSKQMSKYLTVRQEAFLLVLVHSNTKYIHTNMDMTNNLWNQLNHSALSKTPSTYLLGGVHSSSSSSSSSSSSMSSSTSRILNNHGIPTPLSSSNSSPSSLSASSSIGESIHSYSQLPNVVQPIQTQPSSMFTPLPGAKPLKNQQPIDDLFFGTIPLSQVPLSFQQNSNMALFSNYRNFTQQQAQQQQQQQQQQHAQQHAQQQAQQQAHLQAQIQAQIMQQAQQIHQVQQAQQASQQAAQQAAQQAAAQQAAQQQAAQQQSPIQTQLSPPQHITPQHTPQQHIQQQQQHQNYQGTEPHLLGEFMFFNSIDATNSNNNNNNNNNNNNNNNNNNNNNNNNNNNNNNNSTPIDQLNEYRPDYNNNNTNKILPNIIQSLSASSNNSLFSHQHQQQNSQSPTLPPSQNDSVQFHFYQPIHQNNQNNQNHNN.

2 disordered regions span residues 1-33 (MNHRIEDITSNPSSPSPNSPFSSPQVSLQPSII) and 54-166 (NITS…IASR). Low complexity predominate over residues 54–85 (NITSSPSTSSSPPISTTTTTTTTTTTTATAKK). Over residues 87–96 (NSKEKKKTTN) the composition is skewed to basic and acidic residues. The segment covering 97–129 (KDNNNNNNNNNSNNQQQQQQQQQQQQQQQQQQQ) has biased composition (low complexity). A coiled-coil region spans residues 101 to 141 (NNNNNNNSNNQQQQQQQQQQQQQQQQQQQYEEEDDDEEDEG). The segment covering 130-143 (YEEEDDDEEDEGGD) has biased composition (acidic residues). Residues 144-154 (DNTKVGKGEKM) are compositionally biased toward basic and acidic residues. The bZIP domain occupies 151-214 (GEKMKARRTN…LELLKFSQEV (64 aa)). The segment at 153–173 (KMKARRTNQNIASRNYRQRKK) is basic motif. A leucine-zipper region spans residues 176–183 (IKEMEDKI). 2 stretches are compositionally biased toward low complexity: residues 469–484 (SSSSSSSSSSMSSSTS) and 497–510 (SSSNSSPSSLSASS). Disordered stretches follow at residues 469–510 (SSSS…SASS), 658–697 (QQQAAQQQSPIQTQLSPPQHITPQHTPQQHIQQQQQHQNY), 715–771 (DATN…NTNK), and 787–810 (SLFSHQHQQQNSQSPTLPPSQNDS). The stretch at 601-664 (AQQHAQQQAQ…QAAQQQAAQQ (64 aa)) forms a coiled coil. 3 stretches are compositionally biased toward low complexity: residues 674–695 (PPQHITPQHTPQQHIQQQQQHQ), 720–750 (NNNNNNNNNNNNNNNNNNNNNNNNNNNNNNN), and 787–800 (SLFSHQHQQQNSQS).

It belongs to the bZIP family.

It is found in the nucleus. Functionally, probable transcriptional regulator. The chain is Probable basic-leucine zipper transcription factor P (bzpP) from Dictyostelium discoideum (Social amoeba).